The following is a 1117-amino-acid chain: Rhoptry apical surface protein 3 (1117 aa).

The segment covering 1 to 12 has biased composition (polar residues); it reads MENRPRQQTSGH. Disordered regions lie at residues 1 to 27, 47 to 243, 258 to 301, 325 to 398, 415 to 442, 490 to 572, 600 to 619, and 654 to 736; these read MENR…SRPG, NHER…SHFT, DSER…NKGI, SDFK…SLST, WNHA…FLAA, AEAV…ESEL, RPLL…ELRS, and QDGT…RLQG. 3 stretches are compositionally biased toward basic and acidic residues: residues 83–100, 197–209, and 275–300; these read DSNH…DSQK, TPLR…RHVS, and MKPK…DNKG. Composition is skewed to low complexity over residues 418 to 442 and 490 to 508; these read ASPG…FLAA and AEAV…GDSS. A compositionally biased stretch (basic and acidic residues) spans 510–520; the sequence is ESDHSGRERSR. Positions 530–540 are enriched in polar residues; that stretch reads NEITTMRSQRS. A compositionally biased stretch (basic and acidic residues) spans 546–555; the sequence is FSREPERESD. The span at 557–569 shows a compositional bias: polar residues; the sequence is GEMTPTGETSGSE. Over residues 724-734 the composition is skewed to basic and acidic residues; sequence DADRKQEEKRL. In terms of domain architecture, BSD spans 752-788; it reads MLSVDRRLRKLHSDTAVRRMGETEFWKLYFYQVFLLM. Residues 829–838 are compositionally biased toward polar residues; that stretch reads QTSGFTESDT. Disordered stretches follow at residues 829 to 848, 858 to 891, 909 to 964, 1031 to 1066, and 1095 to 1117; these read QTSG…YGFA, IIPP…APEQ, RSPS…GDSP, SSSQ…PSHL, and GTCG…GARA. Residues 839 to 848 show a composition bias toward low complexity; sequence SSPSPSYGFA. Over residues 909–931 the composition is skewed to low complexity; sequence RSPSLSSSSSGTTSVSARGTGSS. The span at 1031–1044 shows a compositional bias: polar residues; that stretch reads SSSQVNGRVSTSRG. Composition is skewed to basic and acidic residues over residues 1046 to 1062 and 1108 to 1117; these read MGED…RLEG and KGKEVQGARA.

In terms of assembly, interacts with RASP2.

The protein localises to the cytoplasmic vesicle. The protein resides in the secretory vesicle. It localises to the rhoptry membrane. The chain is Rhoptry apical surface protein 3 from Toxoplasma gondii (strain ATCC 50853 / GT1).